The primary structure comprises 211 residues: Large ribosomal subunit protein uL4 (211 aa).

The span at 41 to 53 shows a compositional bias: polar residues; it reads QAHSRQGTASTLT. Residues 41–78 are disordered; sequence QAHSRQGTASTLTRAEVRGGGRKPYKQKGTGRARQGTI. Residues 60-71 show a composition bias toward basic residues; the sequence is GGRKPYKQKGTG.

Belongs to the universal ribosomal protein uL4 family. As to quaternary structure, part of the 50S ribosomal subunit.

In terms of biological role, one of the primary rRNA binding proteins, this protein initially binds near the 5'-end of the 23S rRNA. It is important during the early stages of 50S assembly. It makes multiple contacts with different domains of the 23S rRNA in the assembled 50S subunit and ribosome. Its function is as follows. Forms part of the polypeptide exit tunnel. This chain is Large ribosomal subunit protein uL4, found in Prochlorococcus marinus (strain MIT 9303).